We begin with the raw amino-acid sequence, 511 residues long: DNA nucleotidylexotransferase (511 aa).

The tract at residues 1-26 (MDPLQTAHAGPRKKRPRQTGASMAST) is disordered. The Nuclear localization signal signature appears at 11 to 17 (PRKKRPR). Positions 27-124 (PQDVRFQDLV…KPVETTGKHQ (98 aa)) constitute a BRCT domain. Phosphoserine is present on serine 134. Residues 151 to 511 (SQYACQRRTT…DYIEPSERNA (361 aa)) form a mediates interaction with DNTTIP2 region. The interval 258–262 (VGLKT) is involved in DNA binding. Residues 333–338 (GFRRGK) and 342–345 (HDVD) each bind a 2'-deoxyribonucleoside 5'-triphosphate. Residues aspartate 343, aspartate 345, and aspartate 435 each coordinate Mg(2+). 450 to 451 (GW) is an a 2'-deoxyribonucleoside 5'-triphosphate binding site.

It belongs to the DNA polymerase type-X family. In terms of assembly, interacts with PRP19 and DNTTIP1. Forms a ternary complex with DNTTIP2 and core histone. Released from this complex by PCNA. Interacts with TRERF1. Mg(2+) is required as a cofactor.

It is found in the nucleus. The catalysed reaction is DNA(n) + a 2'-deoxyribonucleoside 5'-triphosphate = DNA(n+1) + diphosphate. Its function is as follows. Template-independent DNA polymerase which catalyzes the random addition of deoxynucleoside 5'-triphosphate to the 3'-end of a DNA initiator. One of the in vivo functions of this enzyme is the addition of nucleotides at the junction (N region) of rearranged Ig heavy chain and T-cell receptor gene segments during the maturation of B- and T-cells. The polypeptide is DNA nucleotidylexotransferase (DNTT) (Eulemur macaco (Black lemur)).